Consider the following 155-residue polypeptide: Small ribosomal subunit protein uS8m (155 aa).

It belongs to the universal ribosomal protein uS8 family. As to quaternary structure, component of the mitochondrial small ribosomal subunit (mt-SSU). Mature yeast 74S mitochondrial ribosomes consist of a small (37S) and a large (54S) subunit. The 37S small subunit contains a 15S ribosomal RNA (15S mt-rRNA) and 34 different proteins. The 54S large subunit contains a 21S rRNA (21S mt-rRNA) and 46 different proteins.

The protein resides in the mitochondrion. Its function is as follows. Component of the mitochondrial ribosome (mitoribosome), a dedicated translation machinery responsible for the synthesis of mitochondrial genome-encoded proteins, including at least some of the essential transmembrane subunits of the mitochondrial respiratory chain. The mitoribosomes are attached to the mitochondrial inner membrane and translation products are cotranslationally integrated into the membrane. This is Small ribosomal subunit protein uS8m (MRPS8) from Saccharomyces cerevisiae (strain ATCC 204508 / S288c) (Baker's yeast).